Consider the following 485-residue polypeptide: Expansin-like protein 8 (485 aa).

Residues 1–21 (MRISIILLSLLFLSLHSLIKA) form the signal peptide. Over 22-464 (DITKLSVCGS…QSGHHASSNT (443 aa)) the chain is Extracellular. One can recognise an Expansin-like EG45 domain in the interval 26–139 (LSVCGSARAV…QIVSCGYSGN (114 aa)). Disulfide bonds link Cys-29-Cys-70 and Cys-73-Cys-134. Residues Asn-117 and Asn-365 are each glycosylated (N-linked (GlcNAc...) asparagine). The disordered stretch occupies residues 408–436 (EVNNKPSTTSGTGTTSSKPSSSSGGVSGG). The span at 414 to 431 (STTSGTGTTSSKPSSSSG) shows a compositional bias: low complexity. The N-linked (GlcNAc...) asparagine glycan is linked to Asn-454. The chain crosses the membrane as a helical span at residues 465–485 (NILLPTTFVFFISITILSLLF).

The protein belongs to the expansin family. Expansin A subfamily.

Its subcellular location is the membrane. May serve to lubricate the movement of the cellulose microfibrils during cell growth and wall extension and/or may serve to maintain the fluid state of the slug cell wall. This Dictyostelium discoideum (Social amoeba) protein is Expansin-like protein 8 (expl8).